Here is a 255-residue protein sequence, read N- to C-terminus: Aprataxin and PNK-like factor (255 aa).

The span at 1–11 shows a compositional bias: low complexity; that stretch reads MSATDASTADS. Disordered stretches follow at residues 1 to 117, 131 to 168, and 195 to 255; these read MSAT…VSSS, RRNPAHRSAEAHPGDQDYRRPNFPAPPLGTPACPFGNA, and RLRQ…DDYD. Basic and acidic residues-rich tracts occupy residues 12-22, 40-64, and 137-150; these read GAKRKSSEDIT, KSEEPVASIKDETNPEVPMKIKAEP, and RSAEAHPGDQDYRR. PBZ-type zinc fingers lie at residues 121 to 142 and 161 to 182; these read TSCRFGIRCYRRNPAHRSAEAH and PACPFGNACYRRNPVHFQDYSH. The segment covering 207-218 has biased composition (acidic residues); it reads DDSGTDEEDEPF. The segment covering 221 to 230 has biased composition (basic and acidic residues); it reads DNDRDADYRP. A compositionally biased stretch (acidic residues) spans 234-244; it reads INEDEDDELEF.

The protein belongs to the APLF family.

Functionally, displays apurinic-apyrimidinic (AP) endonuclease and 3'-5' exonuclease activities in vitro. The sequence is that of Aprataxin and PNK-like factor from Drosophila melanogaster (Fruit fly).